Reading from the N-terminus, the 202-residue chain is Protein DEHYDRATION-INDUCED 19 homolog 5 (202 aa).

Residues 88–97 (SHLLKRRKPS) are compositionally biased toward basic residues. A disordered region spans residues 88-120 (SHLLKRRKPSRPSSSWPTPSNNSDPYFEGPPQY). Low complexity predominate over residues 98 to 112 (RPSSSWPTPSNNSDP).

This sequence belongs to the Di19 family.

In Oryza sativa subsp. japonica (Rice), this protein is Protein DEHYDRATION-INDUCED 19 homolog 5 (DI19-5).